A 656-amino-acid polypeptide reads, in one-letter code: DNA ligase (656 aa).

NAD(+)-binding positions include 32–36 (DAVYD) and 81–82 (SL). The active-site N6-AMP-lysine intermediate is Lys-112. NAD(+) is bound by residues Arg-133, Glu-167, and Lys-306. The Zn(2+) site is built by Cys-400, Cys-403, Cys-416, and Cys-421. One can recognise a BRCT domain in the interval 577–656 (ESSSVFSNKT…ELLKRLKEFD (80 aa)).

The protein belongs to the NAD-dependent DNA ligase family. LigA subfamily. Requires Mg(2+) as cofactor. The cofactor is Mn(2+).

The enzyme catalyses NAD(+) + (deoxyribonucleotide)n-3'-hydroxyl + 5'-phospho-(deoxyribonucleotide)m = (deoxyribonucleotide)n+m + AMP + beta-nicotinamide D-nucleotide.. Its function is as follows. DNA ligase that catalyzes the formation of phosphodiester linkages between 5'-phosphoryl and 3'-hydroxyl groups in double-stranded DNA using NAD as a coenzyme and as the energy source for the reaction. It is essential for DNA replication and repair of damaged DNA. The sequence is that of DNA ligase from Helicobacter pylori (strain Shi470).